Consider the following 247-residue polypeptide: Carboxy-S-adenosyl-L-methionine synthase (247 aa).

S-adenosyl-L-methionine is bound by residues Y39, 64–66 (GCS), 89–90 (DN), 117–118 (DI), N132, and R199.

Belongs to the class I-like SAM-binding methyltransferase superfamily. Cx-SAM synthase family. In terms of assembly, homodimer.

The catalysed reaction is prephenate + S-adenosyl-L-methionine = carboxy-S-adenosyl-L-methionine + 3-phenylpyruvate + H2O. Functionally, catalyzes the conversion of S-adenosyl-L-methionine (SAM) to carboxy-S-adenosyl-L-methionine (Cx-SAM). The protein is Carboxy-S-adenosyl-L-methionine synthase of Pectobacterium atrosepticum (strain SCRI 1043 / ATCC BAA-672) (Erwinia carotovora subsp. atroseptica).